Consider the following 564-residue polypeptide: MFS-type transporter dmxR4 (564 aa).

The interval 1 to 61 (MSSERPDGSA…PAKEAPAKPA (61 aa)) is disordered. Polar residues predominate over residues 25-44 (TDSSRTSNDASQTSQDTAVQ). Positions 47–57 (PPKEAPAKEAP) are enriched in basic and acidic residues. Transmembrane regions (helical) follow at residues 71–91 (IALLLGLILMSMFLVALDRSI), 106–126 (AGDIGWYGSAYLLTCCSFQLL), 138–158 (TVFVANLLLFEVASAICGAAP), 169–189 (LAGIGAAGIFAGTIIAMVFLI), and 199–219 (GLFGAVFGITSISGPLIGGGF). A glycan (N-linked (GlcNAc...) asparagine) is linked at Asn222. 7 consecutive transmembrane segments (helical) span residues 227–247 (WCFYINLPIGGVALIAIALWM), 265–285 (GLDLLGTAVFIPCIICLLLAL), 299–319 (IIALLVVFSVTFVVYAALQAF), 348–368 (GVHLLPVMISMIVGSVTGGFF), 376–396 (SPLAVTGSTIMTIGAALIYTF), 405–425 (WIGSLILYGIGLGWSFQAPNL), and 438–458 (SALALIMFVGLLAQAVFVSVG). An N-linked (GlcNAc...) asparagine glycan is attached at Asn469. The next 2 membrane-spanning stretches (helical) occupy residues 470–490 (LSWIPGFTASELTSSGAVSFL) and 512–532 (VFMIGLVLCAVCVPGLASMEW). The interval 534-564 (SVKSRGSWDEKPAAKPTDKPTEEKKVPPEAV) is disordered. Residues 539–564 (GSWDEKPAAKPTDKPTEEKKVPPEAV) show a composition bias toward basic and acidic residues.

It belongs to the major facilitator superfamily. TCR/Tet family.

Its subcellular location is the membrane. Functionally, MFS-type transporter; part of the gene cluster that mediates the biosynthesis of the dimeric xanthones cryptosporioptides. The polypeptide is MFS-type transporter dmxR4 (Cryptosporiopsis sp. (strain 8999)).